We begin with the raw amino-acid sequence, 87 residues long: MVNMKASMFLTFAGLVLLFVVCYASESEEKEFPKEMLSSIFAVDNDFKQEERDCAGYMRECKEKLCCSGYVCSSRWKWCVLPAPWRC.

The first 24 residues, 1–24, serve as a signal peptide directing secretion; it reads MVNMKASMFLTFAGLVLLFVVCYA. A propeptide spanning residues 25–52 is cleaved from the precursor; sequence SESEEKEFPKEMLSSIFAVDNDFKQEER. Intrachain disulfides connect Cys54/Cys67, Cys61/Cys72, and Cys66/Cys79.

It belongs to the neurotoxin 10 (Hwtx-1) family. 51 (Hntx-8) subfamily. Hntx-8 sub-subfamily. As to expression, expressed by the venom gland.

The protein localises to the secreted. Its function is as follows. Ion channel inhibitor. The polypeptide is U3-theraphotoxin-Hhn1a 5 (Cyriopagopus hainanus (Chinese bird spider)).